Consider the following 752-residue polypeptide: BCLAF1 and THRAP3 family member 3 (752 aa).

Residues 1 to 13 show a composition bias toward basic residues; sequence MARSRSRSPRWKQ. 3 disordered regions span residues 1–114, 132–177, and 190–252; these read MARS…YMPT, PTVQ…QMSL, and DELR…DPAR. Phosphoserine is present on residues serine 15 and serine 17. Residues 23–57 are compositionally biased toward basic and acidic residues; it reads FEYHEERHFHGHYDPEYRHDQQRPFTWRMDDEKHG. Residues serine 78 and serine 80 each carry the phosphoserine modification. Over residues 85–109 the composition is skewed to basic and acidic residues; the sequence is PVEKFDTYKPHQEYFPGRGDDDRRS. Basic and acidic residues predominate over residues 190 to 199; it reads DELRHQRVQE. Serine 205 carries the phosphoserine modification. Basic and acidic residues-rich tracts occupy residues 222–231 and 238–252; these read RYPEDHDFRK and RPTD…DPAR. Lysine 416 is covalently cross-linked (Glycyl lysine isopeptide (Lys-Gly) (interchain with G-Cter in SUMO2)). Position 592 is a phosphoserine (serine 592).

This sequence belongs to the BCLAF1/THRAP3 family.

It localises to the mitochondrion. In Mus musculus (Mouse), this protein is BCLAF1 and THRAP3 family member 3.